We begin with the raw amino-acid sequence, 381 residues long: uncharacterized protein (381 aa).

A run of 11 helical transmembrane segments spans residues Ile10–Tyr29, Ile75–Leu93, Leu98–Arg117, Tyr130–Val147, Thr157–Tyr179, Ile199–Glu221, Leu236–Ile255, Tyr262–Thr284, Asn289–Leu311, Ala323–Leu340, and Leu355–Ile374.

The protein resides in the cell membrane. This is an uncharacterized protein from Rickettsia prowazekii (strain Madrid E).